We begin with the raw amino-acid sequence, 713 residues long: Glycine--tRNA ligase beta subunit (713 aa).

Belongs to the class-II aminoacyl-tRNA synthetase family. Tetramer of two alpha and two beta subunits.

It is found in the cytoplasm. The catalysed reaction is tRNA(Gly) + glycine + ATP = glycyl-tRNA(Gly) + AMP + diphosphate. The sequence is that of Glycine--tRNA ligase beta subunit from Leptothrix cholodnii (strain ATCC 51168 / LMG 8142 / SP-6) (Leptothrix discophora (strain SP-6)).